The following is a 417-amino-acid chain: Serine hydroxymethyltransferase (417 aa).

(6S)-5,6,7,8-tetrahydrofolate contacts are provided by residues Leu-121 and 125–127 (GHL). Lys-229 bears the N6-(pyridoxal phosphate)lysine mark. A (6S)-5,6,7,8-tetrahydrofolate-binding site is contributed by 355–357 (SPF).

Belongs to the SHMT family. As to quaternary structure, homodimer. It depends on pyridoxal 5'-phosphate as a cofactor.

It is found in the cytoplasm. The catalysed reaction is (6R)-5,10-methylene-5,6,7,8-tetrahydrofolate + glycine + H2O = (6S)-5,6,7,8-tetrahydrofolate + L-serine. The protein operates within one-carbon metabolism; tetrahydrofolate interconversion. It participates in amino-acid biosynthesis; glycine biosynthesis; glycine from L-serine: step 1/1. Catalyzes the reversible interconversion of serine and glycine with tetrahydrofolate (THF) serving as the one-carbon carrier. This reaction serves as the major source of one-carbon groups required for the biosynthesis of purines, thymidylate, methionine, and other important biomolecules. Also exhibits THF-independent aldolase activity toward beta-hydroxyamino acids, producing glycine and aldehydes, via a retro-aldol mechanism. In Shewanella sp. (strain ANA-3), this protein is Serine hydroxymethyltransferase.